A 702-amino-acid chain; its full sequence is Arginine decarboxylase 1 (702 aa).

Lysine 151 carries the N6-(pyridoxal phosphate)lysine modification. 336–346 contributes to the substrate binding site; the sequence is IDVGGGLGIDY. The span at 668–686 shows a compositional bias: low complexity; sequence ASGESSGMSSDSEGSAAGA. Residues 668–702 form a disordered region; sequence ASGESSGMSSDSEGSAAGAAEEDDDEWEFMRGLTV.

It belongs to the Orn/Lys/Arg decarboxylase class-II family. SpeA subfamily. The cofactor is pyridoxal 5'-phosphate. It depends on Mg(2+) as a cofactor. As to expression, expressed in roots, leaves and stems (at protein level).

It carries out the reaction L-arginine + H(+) = agmatine + CO2. It participates in amine and polyamine biosynthesis; agmatine biosynthesis; agmatine from L-arginine: step 1/1. The sequence is that of Arginine decarboxylase 1 (ADC1) from Oryza sativa subsp. japonica (Rice).